A 459-amino-acid chain; its full sequence is Sulfide:quinone oxidoreductase, mitochondrial (459 aa).

The N-terminal 24 residues, 1–24 (MLTLNSTIKSVTGSFQSASMLARF), are a transit peptide targeting the mitochondrion. FAD is bound at residue 35 to 39 (GGGSA). Catalysis depends on cysteine persulfide intermediate residues C204 and C383.

This sequence belongs to the SQRD family. Requires FAD as cofactor.

Its subcellular location is the mitochondrion. In terms of biological role, catalyzes the oxidation of hydrogen sulfide, with the help of a quinone. This chain is Sulfide:quinone oxidoreductase, mitochondrial (hmt2), found in Schizosaccharomyces pombe (strain 972 / ATCC 24843) (Fission yeast).